Consider the following 528-residue polypeptide: Calcium-dependent protein kinase 17 (528 aa).

The interval 1 to 65 is disordered; the sequence is MGNCCSHGRD…GPIGPVLGRP (65 aa). Gly2 carries N-myristoyl glycine lipidation. The segment covering 20 to 45 has biased composition (low complexity); sequence NGASASNAANSTGPTAEASVPQSKHA. The Protein kinase domain maps to 73–331; the sequence is YSLGKELGRG…AAQVLNHPWI (259 aa). Residues 79 to 87 and Lys102 contribute to the ATP site; that span reads LGRGQFGVT. Residue Asp197 is the Proton acceptor of the active site. Phosphoserine is present on Ser237. The tract at residues 337–367 is autoinhibitory domain; it reads APDVPLDNAVMSRLKQFKAMNNFKKVALRVI. EF-hand domains are found at residues 374 to 409, 410 to 445, 446 to 481, and 485 to 516; these read EEIM…QGTR, LSEY…INRL, DREE…FGMN, and DIKE…GNPD. Positions 387, 389, 391, 393, 398, 423, 425, 427, 429, 434, 459, 461, 463, 465, 470, 494, 496, 498, 500, and 505 each coordinate Ca(2+).

The protein belongs to the protein kinase superfamily. Ser/Thr protein kinase family. CDPK subfamily.

It is found in the membrane. The enzyme catalyses L-seryl-[protein] + ATP = O-phospho-L-seryl-[protein] + ADP + H(+). The catalysed reaction is L-threonyl-[protein] + ATP = O-phospho-L-threonyl-[protein] + ADP + H(+). With respect to regulation, activated by calcium. Autophosphorylation may play an important role in the regulation of the kinase activity. In terms of biological role, may play a role in signal transduction pathways that involve calcium as a second messenger. The polypeptide is Calcium-dependent protein kinase 17 (CPK17) (Arabidopsis thaliana (Mouse-ear cress)).